The following is a 295-amino-acid chain: uncharacterized protein (295 aa).

An N-terminal signal peptide occupies residues 1–19 (MFKKYIFILILFIASIARA). A disordered region spans residues 275–295 (RNNPPLKNNNAKGKNPYDTNK). A compositionally biased stretch (low complexity) spans 276–295 (NNPPLKNNNAKGKNPYDTNK).

This is an uncharacterized protein from Rickettsia conorii (strain ATCC VR-613 / Malish 7).